The chain runs to 278 residues: 3-methyl-2-oxobutanoate hydroxymethyltransferase 1 (278 aa).

Residues Asp-49 and Asp-88 each contribute to the Mg(2+) site. Residues 49 to 50 (DS), Asp-88, and Lys-118 contribute to the 3-methyl-2-oxobutanoate site. Residue Glu-120 participates in Mg(2+) binding. The Proton acceptor role is filled by Glu-187.

The protein belongs to the PanB family. In terms of assembly, homodecamer; pentamer of dimers. Requires Mg(2+) as cofactor.

The protein resides in the cytoplasm. It catalyses the reaction 3-methyl-2-oxobutanoate + (6R)-5,10-methylene-5,6,7,8-tetrahydrofolate + H2O = 2-dehydropantoate + (6S)-5,6,7,8-tetrahydrofolate. It participates in cofactor biosynthesis; (R)-pantothenate biosynthesis; (R)-pantoate from 3-methyl-2-oxobutanoate: step 1/2. Catalyzes the reversible reaction in which hydroxymethyl group from 5,10-methylenetetrahydrofolate is transferred onto alpha-ketoisovalerate to form ketopantoate. This Hahella chejuensis (strain KCTC 2396) protein is 3-methyl-2-oxobutanoate hydroxymethyltransferase 1.